A 317-amino-acid chain; its full sequence is Probable pathogenesis-related protein CaO19.6200 (317 aa).

The first 23 residues, 1 to 23 (MKFLQSFPVILAVFSFAANLVSS), serve as a signal peptide directing secretion. Disordered regions lie at residues 52 to 116 (RLET…TTVT) and 155 to 179 (PSAP…DSQL). The segment covering 58 to 76 (PTSTTTTIVIPSSKPSSPE) has biased composition (low complexity). Polar residues-rich tracts occupy residues 84–116 (QPMF…TTVT) and 168–179 (ENNSGTNDDSQL). The N-linked (GlcNAc...) asparagine glycan is linked to asparagine 169. The SCP domain maps to 187 to 297 (LEAHNIKRAS…GWGLYIICNY (111 aa)).

Belongs to the CRISP family.

Its subcellular location is the secreted. Functionally, secreted protein that acts as a virulence factor during infections. This chain is Probable pathogenesis-related protein CaO19.6200, found in Candida albicans (strain SC5314 / ATCC MYA-2876) (Yeast).